The following is a 367-amino-acid chain: Probable sugar phosphate/phosphate translocator At1g48230 (367 aa).

10 consecutive transmembrane segments (helical) span residues 9 to 29, 43 to 63, 76 to 96, 106 to 126, 140 to 160, 163 to 183, 193 to 213, 229 to 249, 257 to 276, and 280 to 302; these read LVLTYIYLLIYIILSSGVILY, LPITLTMIHMGFSGFVAFLLI, FEIYVTCVVPISAFFASSLWF, VAFIQMLKALMPVATFLMAVV, MVLVSVGVVVSSYGEINFNVI, VYQVMGIFAEALRLVLTQVLL, VTSLYYIAPCSFVFLSLPWYV, WIFFSNALCALALNFSIFLVI, IRVAGVLKDWILIALSTVIF, and TITGLNITGYAIALCGVVMYNYI. Residues 321–330 are compositionally biased toward basic and acidic residues; it reads ITKDWKEKNS. Positions 321–341 are disordered; sequence ITKDWKEKNSSDGGSPRGLEL.

Belongs to the TPT transporter family. TPT (TC 2.A.7.9) subfamily.

It localises to the membrane. The protein is Probable sugar phosphate/phosphate translocator At1g48230 of Arabidopsis thaliana (Mouse-ear cress).